Here is a 261-residue protein sequence, read N- to C-terminus: Undecaprenyl-diphosphatase (261 aa).

The next 7 membrane-spanning stretches (helical) occupy residues 38–58 (RSDF…TFVF), 75–95 (RDYV…GLAV), 106–126 (IQPI…AESV), 136–156 (VTWS…VFPG), 181–201 (FSFL…CFEL), 217–237 (VAFV…LGYI), and 241–261 (SFAP…TWLT).

The protein belongs to the UppP family.

Its subcellular location is the cell inner membrane. It catalyses the reaction di-trans,octa-cis-undecaprenyl diphosphate + H2O = di-trans,octa-cis-undecaprenyl phosphate + phosphate + H(+). Functionally, catalyzes the dephosphorylation of undecaprenyl diphosphate (UPP). Confers resistance to bacitracin. The protein is Undecaprenyl-diphosphatase of Xylella fastidiosa (strain 9a5c).